We begin with the raw amino-acid sequence, 95 residues long: Large ribosomal subunit protein bL25 (95 aa).

The protein belongs to the bacterial ribosomal protein bL25 family. In terms of assembly, part of the 50S ribosomal subunit; part of the 5S rRNA/L5/L18/L25 subcomplex. Contacts the 5S rRNA. Binds to the 5S rRNA independently of L5 and L18.

Its function is as follows. This is one of the proteins that binds to the 5S RNA in the ribosome where it forms part of the central protuberance. The chain is Large ribosomal subunit protein bL25 from Actinobacillus succinogenes (strain ATCC 55618 / DSM 22257 / CCUG 43843 / 130Z).